Consider the following 184-residue polypeptide: Elongation factor P (184 aa).

Belongs to the elongation factor P family.

The protein resides in the cytoplasm. Its pathway is protein biosynthesis; polypeptide chain elongation. Involved in peptide bond synthesis. Stimulates efficient translation and peptide-bond synthesis on native or reconstituted 70S ribosomes in vitro. Probably functions indirectly by altering the affinity of the ribosome for aminoacyl-tRNA, thus increasing their reactivity as acceptors for peptidyl transferase. In Variovorax paradoxus (strain S110), this protein is Elongation factor P.